The sequence spans 144 residues: Maximins 6/H10 (144 aa).

A signal peptide spans 1-18; that stretch reads MNFKYIVAVSFLIASAYA. Residues 19-43 constitute a propeptide that is removed on maturation; it reads RSVKNDEQSLSQRDVLDEESLREIR. N70 is modified (asparagine amide). Residues 74-123 constitute a propeptide that is removed on maturation; the sequence is TAEDHEVMKRLEAVMRDLDSLDHPEEASERETRGFNQEEIANRFTKKEKR. A Leucine amide modification is found at L143.

The protein belongs to the bombinin family. As to expression, expressed by the skin glands.

It localises to the secreted. Maximin-6 shows antimicrobial activity against bacteria and against the fungus C.albicans. It has little hemolytic activity. Its function is as follows. Maximin-H10 shows antimicrobial activity against bacteria and against the fungus C.albicans. Shows strong hemolytic activity. The protein is Maximins 6/H10 of Bombina maxima (Giant fire-bellied toad).